Consider the following 91-residue polypeptide: Small ribosomal subunit protein bS16 (91 aa).

It belongs to the bacterial ribosomal protein bS16 family.

The polypeptide is Small ribosomal subunit protein bS16 (Exiguobacterium sp. (strain ATCC BAA-1283 / AT1b)).